The primary structure comprises 392 residues: Formate-dependent phosphoribosylglycinamide formyltransferase (392 aa).

N(1)-(5-phospho-beta-D-ribosyl)glycinamide is bound by residues 22–23 and Glu-82; that span reads EL. Residues Arg-114, Lys-155, 160–165, 195–198, and Glu-203 each bind ATP; these read SSGKGQ and EGVV. Residues 119 to 308 form the ATP-grasp domain; sequence RLAAEELQLP…EFALHVRAFL (190 aa). Positions 267 and 279 each coordinate Mg(2+). Residues Asp-286, Lys-355, and 362 to 363 each bind N(1)-(5-phospho-beta-D-ribosyl)glycinamide; that span reads RR.

It belongs to the PurK/PurT family. In terms of assembly, homodimer.

It carries out the reaction N(1)-(5-phospho-beta-D-ribosyl)glycinamide + formate + ATP = N(2)-formyl-N(1)-(5-phospho-beta-D-ribosyl)glycinamide + ADP + phosphate + H(+). Its pathway is purine metabolism; IMP biosynthesis via de novo pathway; N(2)-formyl-N(1)-(5-phospho-D-ribosyl)glycinamide from N(1)-(5-phospho-D-ribosyl)glycinamide (formate route): step 1/1. Involved in the de novo purine biosynthesis. Catalyzes the transfer of formate to 5-phospho-ribosyl-glycinamide (GAR), producing 5-phospho-ribosyl-N-formylglycinamide (FGAR). Formate is provided by PurU via hydrolysis of 10-formyl-tetrahydrofolate. The polypeptide is Formate-dependent phosphoribosylglycinamide formyltransferase (Shigella sonnei (strain Ss046)).